The following is a 593-amino-acid chain: 3-hydroxy-3-methylglutaryl-coenzyme A reductase (593 aa).

Residues 1–36 (MDVRRRSINSIHQIPSVGGTAPPMLKPKQPTKVDAV) are disordered. 2 consecutive transmembrane segments (helical) span residues 52 to 72 (LYIT…YLLV) and 94 to 114 (AIFT…IGLV). A linker region spans residues 115-177 (QPFTSRSSHD…PVPISPPSSE (63 aa)). The segment at 178-593 (EDEEIIKSVV…SNKDVTKASS (416 aa)) is catalytic. E272 acts as the Charge relay system in catalysis. N336 carries N-linked (GlcNAc...) asparagine glycosylation. The active-site Charge relay system is K404. N449 is a glycosylation site (N-linked (GlcNAc...) asparagine). Residue D480 is the Charge relay system of the active site. H578 acts as the Proton donor in catalysis. N-linked (GlcNAc...) asparagine glycosylation is present at N582.

It belongs to the HMG-CoA reductase family.

Its subcellular location is the endoplasmic reticulum membrane. It carries out the reaction (R)-mevalonate + 2 NADP(+) + CoA = (3S)-3-hydroxy-3-methylglutaryl-CoA + 2 NADPH + 2 H(+). The protein operates within metabolic intermediate biosynthesis; (R)-mevalonate biosynthesis; (R)-mevalonate from acetyl-CoA: step 3/3. Catalyzes the synthesis of mevalonate. The specific precursor of all isoprenoid compounds present in plants. The polypeptide is 3-hydroxy-3-methylglutaryl-coenzyme A reductase (Camptotheca acuminata (Happy tree)).